Consider the following 82-residue polypeptide: Putative antitoxin Saci_0468 (82 aa).

The protein belongs to the UPF0330 family.

In terms of biological role, possibly the antitoxin component of a type II toxin-antitoxin (TA) system. The sequence is that of Putative antitoxin Saci_0468 from Sulfolobus acidocaldarius (strain ATCC 33909 / DSM 639 / JCM 8929 / NBRC 15157 / NCIMB 11770).